The primary structure comprises 452 residues: Kremen protein 1 (452 aa).

Positions 1–22 are cleaved as a signal peptide; that stretch reads MVMDIWTISLRILLFPSALVLC. Residues 23-369 lie on the Extracellular side of the membrane; that stretch reads SDSFHSECYT…TTSPSRPSGH (347 aa). Positions 29–112 constitute a Kringle domain; that stretch reads ECYTVNGADY…YWKYCDIPAC (84 aa). Intrachain disulfides connect C30/C112, C53/C93, C82/C107, C120/C184, C145/C165, C149/C167, C188/C196, and C212/C238. N43 and N57 each carry an N-linked (GlcNAc...) asparagine glycan. The WSC domain maps to 114–208; that stretch reads MPGNLGCFRD…DGRIILFDSL (95 aa). Residues 212–319 enclose the CUB domain; it reads CGGNYSTDSA…QGFSVVYEAF (108 aa). N-linked (GlcNAc...) asparagine glycosylation is found at N215, N253, N291, N328, and N344. Residues 370–390 traverse the membrane as a helical segment; sequence VPGWTIYALTGLLILTIIAIS. Topologically, residues 391 to 452 are cytoplasmic; that stretch reads AKALLHISMK…HDDRNPLVGE (62 aa).

As to quaternary structure, interacts with lrp6.

It is found in the cell membrane. Receptor for Dickkopf proteins. Cooperates with DKK1/2 proteins to inhibit Wnt/beta-catenin signaling by promoting the endocytosis of Wnt receptors LRP5 and LRP6. In the absence of DKK1, potentiates Wnt-beta-catenin signaling by maintaining LRP5 or LRP6 at the cell membrane. The polypeptide is Kremen protein 1 (kremen1) (Xenopus laevis (African clawed frog)).